The following is a 489-amino-acid chain: Betaine aldehyde dehydrogenase (489 aa).

K(+) contacts are provided by T26 and D93. 150-152 (GAW) is a binding site for NAD(+). K162 (charge relay system) is an active-site residue. 176-179 (KPSE) serves as a coordination point for NAD(+). Residue I180 participates in K(+) binding. Position 229–232 (229–232 (GVET)) interacts with NAD(+). L245 is a K(+) binding site. The Proton acceptor role is filled by E251. NAD(+)-binding residues include G253, C285, and E386. C285 acts as the Nucleophile in catalysis. C285 is subject to Cysteine sulfenic acid (-SOH). K(+)-binding residues include K456 and G459. The active-site Charge relay system is E463.

Belongs to the aldehyde dehydrogenase family. In terms of assembly, dimer of dimers. It depends on K(+) as a cofactor.

The catalysed reaction is betaine aldehyde + NAD(+) + H2O = glycine betaine + NADH + 2 H(+). Its pathway is amine and polyamine biosynthesis; betaine biosynthesis via choline pathway; betaine from betaine aldehyde: step 1/1. Functionally, involved in the biosynthesis of the osmoprotectant glycine betaine. Catalyzes the irreversible oxidation of betaine aldehyde to the corresponding acid. This is Betaine aldehyde dehydrogenase from Paraburkholderia phytofirmans (strain DSM 17436 / LMG 22146 / PsJN) (Burkholderia phytofirmans).